Here is a 228-residue protein sequence, read N- to C-terminus: Phosphoribosylformylglycinamidine synthase subunit PurQ (228 aa).

In terms of domain architecture, Glutamine amidotransferase type-1 spans 2–225 (KAAVISFPGS…INQTEGADVR (224 aa)). Catalysis depends on Cys86, which acts as the Nucleophile. Catalysis depends on residues His194 and Glu196.

In terms of assembly, part of the FGAM synthase complex composed of 1 PurL, 1 PurQ and 2 PurS subunits.

It is found in the cytoplasm. It carries out the reaction N(2)-formyl-N(1)-(5-phospho-beta-D-ribosyl)glycinamide + L-glutamine + ATP + H2O = 2-formamido-N(1)-(5-O-phospho-beta-D-ribosyl)acetamidine + L-glutamate + ADP + phosphate + H(+). The enzyme catalyses L-glutamine + H2O = L-glutamate + NH4(+). The protein operates within purine metabolism; IMP biosynthesis via de novo pathway; 5-amino-1-(5-phospho-D-ribosyl)imidazole from N(2)-formyl-N(1)-(5-phospho-D-ribosyl)glycinamide: step 1/2. Functionally, part of the phosphoribosylformylglycinamidine synthase complex involved in the purines biosynthetic pathway. Catalyzes the ATP-dependent conversion of formylglycinamide ribonucleotide (FGAR) and glutamine to yield formylglycinamidine ribonucleotide (FGAM) and glutamate. The FGAM synthase complex is composed of three subunits. PurQ produces an ammonia molecule by converting glutamine to glutamate. PurL transfers the ammonia molecule to FGAR to form FGAM in an ATP-dependent manner. PurS interacts with PurQ and PurL and is thought to assist in the transfer of the ammonia molecule from PurQ to PurL. The sequence is that of Phosphoribosylformylglycinamidine synthase subunit PurQ from Lacticaseibacillus casei (strain BL23) (Lactobacillus casei).